We begin with the raw amino-acid sequence, 563 residues long: Tripeptidyl-peptidase 1 (563 aa).

Positions 1-19 (MGLQACLLGLFALILSGKC) are cleaved as a signal peptide. The propeptide at 20-195 (SYSPEPDQRR…PEPQVTGTVG (176 aa)) is removed in mature form. Cysteines 111 and 122 form a disulfide. The Peptidase S53 domain maps to 199–563 (GVTPSVIRKR…PALLKTLLNP (365 aa)). N-linked (GlcNAc...) asparagine glycans are attached at residues N210 and N222. Residues E272 and D276 each act as charge relay system in the active site. Residues N286, N313, and N443 are each glycosylated (N-linked (GlcNAc...) asparagine). Cystine bridges form between C365-C526 and C522-C537. Catalysis depends on S475, which acts as the Charge relay system. 2 residues coordinate Ca(2+): D517 and V518. G539, G541, and D543 together coordinate Ca(2+).

In terms of assembly, monomer. Interacts with CLN5. Interacts with CLN3. The cofactor is Ca(2+). Activated by autocatalytic proteolytical processing upon acidification. N-glycosylation is required for processing and activity. Detected in all tissues examined with highest levels in heart and placenta and relatively similar levels in other tissues.

It localises to the lysosome. The protein resides in the melanosome. The enzyme catalyses Release of an N-terminal tripeptide from a polypeptide, but also has endopeptidase activity.. Inhibited by diisopropyl fluorophosphate (DFP). Functionally, lysosomal serine protease with tripeptidyl-peptidase I activity. May act as a non-specific lysosomal peptidase which generates tripeptides from the breakdown products produced by lysosomal proteinases. Requires substrates with an unsubstituted N-terminus. The chain is Tripeptidyl-peptidase 1 (TPP1) from Homo sapiens (Human).